We begin with the raw amino-acid sequence, 517 residues long: Nicotine N-demethylase CYP82E4 (517 aa).

Residues leucine 2–tryptophan 22 form a helical membrane-spanning segment. Lysine 254 is covalently cross-linked (Glycyl lysine isopeptide (Lys-Gly) (interchain with G-Cter in ubiquitin)). Position 457 (cysteine 457) interacts with heme.

This sequence belongs to the cytochrome P450 family. CYP82E2 subfamily. The cofactor is heme. As to expression, expressed in leaves.

The protein resides in the membrane. The enzyme catalyses (S)-nicotine + reduced [NADPH--hemoprotein reductase] + O2 = (S)-nornicotine + formaldehyde + oxidized [NADPH--hemoprotein reductase] + H2O + H(+). The protein operates within alkaloid biosynthesis; nicotine biosynthesis. Functionally, involved in the biosynthesis of pyridine alkaloid natural products, leading mainly to the production of anabasine, anatabine, nicotine and nornicotine, effective deterrents against herbivores with antiparasitic and pesticide properties (neurotoxins); nornicotine serves as the precursor in the synthesis of the carcinogen compound N'-nitrosonornicotine (NNN). Catalyzes the demethylation of nicotine to form nornicotine. In Nicotiana tomentosiformis (Tobacco), this protein is Nicotine N-demethylase CYP82E4.